We begin with the raw amino-acid sequence, 974 residues long: Leucine-rich repeat receptor-like kinase protein SUNN (974 aa).

An N-terminal signal peptide occupies residues 1–20 (MKNITCYLLLLCMLFTTCYS). 4 N-linked (GlcNAc...) asparagine glycosylation sites follow: Asn-75, Asn-104, Asn-123, and Asn-136. 20 LRR repeats span residues 92 to 116 (LNMLESLTITMDNLTGELPTELSKL), 117 to 141 (TSLRILNISHNLFSGNFPGNITFGM), 143 to 165 (KLEALDAYDNNFEGPLPEEIVSL), 166 to 188 (MKLKYLSFAGNFFSGTIPESYSE), 189 to 213 (FQKLEILRLNYNSLTGKIPKSLSKL), 238 to 262 (IKSLRYLEISNANLTGEIPPSLGNL), 263 to 286 (ENLDSLFLQMNNLTGTIPPELSSM), 288 to 309 (SLMSLDLSINGLSGEIPETFSK), 310 to 334 (LKNLTLINFFQNKLRGSIPAFIGDL), 335 to 358 (PNLETLQVWENNFSFVLPQNLGSN), 360 to 382 (KFIYFDVTKNHLTGLIPPELCKS), 383 to 406 (KKLKTFIVTDNFFRGPIPNGIGPC), 407 to 430 (KSLEKIRVANNYLDGPVPPGIFQL), 431 to 454 (PSVQIIELGNNRFNGQLPTEISGN), 456 to 477 (LGNLALSNNLFTGRIPASMKNL), 478 to 501 (RSLQTLLLDANQFLGEIPAEVFAL), 503 to 525 (VLTRINISGNNLTGGIPKTVTQC), 527 to 549 (SLTAVDFSRNMLTGEVPKGMKNL), 550 to 573 (KVLSIFNVSHNSISGKIPDEIRFM), and 574 to 598 (TSLTTLDLSYNNFTGIVPTGGQFLV). N-linked (GlcNAc...) asparagine glycans are attached at residues Asn-250 and Asn-274. N-linked (GlcNAc...) asparagine glycans are attached at residues Asn-312 and Asn-346. N-linked (GlcNAc...) asparagine glycosylation is found at Asn-508 and Asn-513. 2 N-linked (GlcNAc...) asparagine glycosylation sites follow: Asn-556 and Asn-585. Residues 635 to 655 (VVIAIVFATAVLMVIVTLHMM) form a helical membrane-spanning segment. The 288-residue stretch at 685–972 (LKEENIIGKG…PPHSTSHNLI (288 aa)) folds into the Protein kinase domain. ATP contacts are provided by residues 691 to 699 (IGKGGAGIV) and Lys-713. The active-site Proton acceptor is Asp-810.

Belongs to the protein kinase superfamily. Ser/Thr protein kinase family. As to expression, expressed in roots and shoots. Expressed in the vasculature of leaves, petioles, stems and roots.

It localises to the cell membrane. The catalysed reaction is L-seryl-[protein] + ATP = O-phospho-L-seryl-[protein] + ADP + H(+). It carries out the reaction L-threonyl-[protein] + ATP = O-phospho-L-threonyl-[protein] + ADP + H(+). Its function is as follows. LRR receptor kinase involved in the regulation of root growth and root nodule organogenesis. Involved in long distance nodulation signaling events. Involved in the autoregulation of nodulation (AON), a long distance systemic signaling from root to shoot and back again, which allows legumes to limit the number of root nodules formed based on available nitrogen and previous rhizobial colonization. Acts from shoot to root to control AON. Interacts with CLE12 and CLE13 signaling to control nodule numbers. Required for the modulation of shoot-to-root auxin transport in response to altered nitrogen tissue concentrations and in the absence of rhizobia. Shoot-to-root auxin transport influences lateral root density and length. Involved in the regulation of root colonization by arbuscular mycorrhizal (AM) fungi. Interacts with CLE33 and CL53 signaling to repress strigolactone biosynthetic genes and strigolactone content in the roots, and consequently reduces the promotion of further colonization by AM fungi. The sequence is that of Leucine-rich repeat receptor-like kinase protein SUNN from Medicago truncatula (Barrel medic).